Here is a 356-residue protein sequence, read N- to C-terminus: Leucoanthocyanidin dioxygenase (356 aa).

Substrate is bound by residues tyrosine 142 and lysine 213. Residues 208-307 (LLLQMKINYY…RISWAVFCEP (100 aa)) form the Fe2OG dioxygenase domain. 2-oxoglutarate is bound at residue 215-217 (NYY). Histidine 232 contributes to the Fe cation binding site. Threonine 233 is a substrate binding site. Aspartate 234 and histidine 288 together coordinate Fe cation. 298 to 300 (RIS) is a 2-oxoglutarate binding site. Substrate-binding residues include glutamate 306 and lysine 341.

This sequence belongs to the iron/ascorbate-dependent oxidoreductase family. L-ascorbate is required as a cofactor. The cofactor is Fe(2+). In terms of tissue distribution, expressed in young seedlings (at protein level).

It catalyses the reaction a (2R,3S,4S)-leucoanthocyanidin + 2-oxoglutarate + O2 = a 4-H-anthocyanidin with a 3-hydroxy group + succinate + CO2 + 2 H2O. The enzyme catalyses (2R,3S,4S)-3,4-leucopelargonidin + 2-oxoglutarate + O2 = (4S)-2,3-dehydroleucopelargonidin + succinate + CO2 + H2O + H(+). It carries out the reaction (2R,3S,4S)-leucocyanidin + 2-oxoglutarate + O2 = (4S)-2,3-dehydroleucocyanidin + succinate + CO2 + H2O + H(+). It participates in pigment biosynthesis; anthocyanin biosynthesis. Functionally, involved in anthocyanin and protoanthocyanidin biosynthesis by catalyzing the oxidation of leucoanthocyanidins into anthocyanidins. Possesses low flavonol synthase activity in vitro towards dihydrokaempferol and dihydroquercetin producing kaempferol and quercitin, respectively. The sequence is that of Leucoanthocyanidin dioxygenase (LDOX) from Arabidopsis thaliana (Mouse-ear cress).